The primary structure comprises 243 residues: Retrotransposon Gag-like protein 6 (243 aa).

Over residues 1-12 (MVQPRTSKTESP) the composition is skewed to polar residues. A disordered region spans residues 1-22 (MVQPRTSKTESPASAPGASAQM). A coiled-coil region spans residues 29 to 69 (LTSLRLTNSALRREASTLRAEKANLTNMLESVMAELTLLRT). 2 disordered regions span residues 84–105 (SAITSNGTRPMTTPPTSLPEPF) and 218–243 (TGSCPVHPASNGTNPAPALPSRGRNL). Positions 85–94 (AITSNGTRPM) are enriched in polar residues.

Belongs to the LDOC1 family. In terms of tissue distribution, widely expressed.

The protein is Retrotransposon Gag-like protein 6 of Mus musculus (Mouse).